Reading from the N-terminus, the 106-residue chain is uncharacterized protein (106 aa).

2 helical membrane-spanning segments follow: residues 46–68 (LLQE…ILAF) and 73–92 (AVFI…LIAA).

Its subcellular location is the cell membrane. This is an uncharacterized protein from Bacillus subtilis (strain 168).